A 464-amino-acid chain; its full sequence is tRNA modification GTPase MnmE (464 aa).

(6S)-5-formyl-5,6,7,8-tetrahydrofolate-binding residues include arginine 27, glutamate 90, and lysine 129. Residues 222 to 384 (GVALVLAGSV…LYDKIRALIS (163 aa)) enclose the TrmE-type G domain. Residues 232-237 (NAGKSS), 251-257 (SSYPGTT), and 276-279 (DTAG) each bind GTP. Positions 236 and 257 each coordinate Mg(2+). Lysine 464 contacts (6S)-5-formyl-5,6,7,8-tetrahydrofolate.

It belongs to the TRAFAC class TrmE-Era-EngA-EngB-Septin-like GTPase superfamily. TrmE GTPase family. In terms of assembly, homodimer. Heterotetramer of two MnmE and two MnmG subunits. It depends on K(+) as a cofactor.

It localises to the cytoplasm. Its function is as follows. Exhibits a very high intrinsic GTPase hydrolysis rate. Involved in the addition of a carboxymethylaminomethyl (cmnm) group at the wobble position (U34) of certain tRNAs, forming tRNA-cmnm(5)s(2)U34. This is tRNA modification GTPase MnmE from Borreliella burgdorferi (strain ATCC 35210 / DSM 4680 / CIP 102532 / B31) (Borrelia burgdorferi).